The chain runs to 568 residues: Phenylalanine--tRNA ligase beta subunit (568 aa).

The B5 domain occupies 278 to 353 (LTPKSFEVEL…IAYGYNEIEP (76 aa)). Mg(2+) contacts are provided by D331, D337, E340, and D341.

Belongs to the phenylalanyl-tRNA synthetase beta subunit family. Type 2 subfamily. In terms of assembly, tetramer of two alpha and two beta subunits. Requires Mg(2+) as cofactor.

It is found in the cytoplasm. The enzyme catalyses tRNA(Phe) + L-phenylalanine + ATP = L-phenylalanyl-tRNA(Phe) + AMP + diphosphate + H(+). The protein is Phenylalanine--tRNA ligase beta subunit of Thermococcus gammatolerans (strain DSM 15229 / JCM 11827 / EJ3).